Here is a 277-residue protein sequence, read N- to C-terminus: MEEEEHFVNIDLNDDNICSICKLETDTGTLSFCHVCFELSIEGISSATLLHSKSLRGHRDCFEKYHLIANQKLSRAKASHSTYEGVKRALSQRINRIIQYAQNRDSVTPENPGRWGAKQILCHTQQAGRKLVPQSDAQVPRYAPRWTEEASMVSESDYGKSMLDCHSAEELGLGLWPGERPQNREQRDSRQRRHSGHSREELMRKNVEELRQLNEQLLLQIQNVFEELSVVVQEKDSLSSELHVRHIAIEQLFKNCAKLPWLQIGRAGVKAANNPVE.

The interval 173–201 (LGLWPGERPQNREQRDSRQRRHSGHSREE) is disordered. Positions 197 to 229 (HSREELMRKNVEELRQLNEQLLLQIQNVFEELS) form a coiled coil.

The protein belongs to the EURL family.

In terms of biological role, plays a role in cortical progenitor cell proliferation and differentiation. May promote dendritic spine development of post-migratory cortical projection neurons by modulating the beta-catenin signaling pathway. The chain is Protein EURL homolog from Danio rerio (Zebrafish).